A 185-amino-acid chain; its full sequence is UPF0397 protein PAM_019 (185 aa).

5 helical membrane passes run 13 to 33 (IGLSAAIFFVLSCFASIPVGF), 42 to 62 (AFLAFIAVAFGPAVGFYVGLI), 69 to 89 (FILFGNVSWNWVLCSALIGFI), 109 to 129 (IVYFWLYQVAFNFIIWGFFAP), and 143 to 163 (VYLQSFLIVISNILAYSVVGI).

This sequence belongs to the UPF0397 family.

Its subcellular location is the cell membrane. This is UPF0397 protein PAM_019 from Onion yellows phytoplasma (strain OY-M).